Reading from the N-terminus, the 84-residue chain is Limulin (84 aa).

A Pentraxin (PTX) domain is found at 6–84 (ITSKVKFPPS…DEQGDFLFNV (79 aa)). 2 residues coordinate Ca(2+): D67 and N68.

It belongs to the pentraxin family. As to quaternary structure, homopentamer. Pentraxin (or pentaxin) have a discoid arrangement of 5 non-covalently bound subunits. The cofactor is Ca(2+). In terms of processing, a disulfide bond links Cys-38 to a Cys in the C-terminal half of the chain of 163 residues.

Functionally, lectin that binds sialic acid. Displays antiviral activity and therefore may contribute to defense against infections. The polypeptide is Limulin (Limulus polyphemus (Atlantic horseshoe crab)).